Reading from the N-terminus, the 406-residue chain is tRNA-specific 2-thiouridylase MnmA (406 aa).

Residues 6 to 13 (AMSGGVDS) and L32 contribute to the ATP site. C101 functions as the Nucleophile in the catalytic mechanism. C101 and C193 are joined by a disulfide. G125 lines the ATP pocket. The interaction with tRNA stretch occupies residues 143–145 (KDQ). The active-site Cysteine persulfide intermediate is C193. Residues 378–406 (GAPIEEQPAPGTVGAVDADAIEQGEDAQR) are disordered. The segment covering 396-406 (DAIEQGEDAQR) has biased composition (acidic residues).

This sequence belongs to the MnmA/TRMU family.

The protein resides in the cytoplasm. It catalyses the reaction S-sulfanyl-L-cysteinyl-[protein] + uridine(34) in tRNA + AH2 + ATP = 2-thiouridine(34) in tRNA + L-cysteinyl-[protein] + A + AMP + diphosphate + H(+). Its function is as follows. Catalyzes the 2-thiolation of uridine at the wobble position (U34) of tRNA, leading to the formation of s(2)U34. The sequence is that of tRNA-specific 2-thiouridylase MnmA from Corynebacterium urealyticum (strain ATCC 43042 / DSM 7109).